A 106-amino-acid chain; its full sequence is Venom family 8-like peptide Pr8a (106 aa).

The N-terminal stretch at 1-17 (MSPIAFLLPFLLQMVLS) is a signal peptide.

In terms of processing, contains 2 disulfide bonds. In terms of tissue distribution, expressed by the venom gland (anterior main gland) (at protein level).

The protein resides in the secreted. The polypeptide is Venom family 8-like peptide Pr8a (Platymeris rhadamanthus (Red spot assassin bug)).